A 102-amino-acid polypeptide reads, in one-letter code: PE family immunomodulator PE15 (102 aa).

Residues 3-91 (LRVVPESLAG…SGASYAARDA (89 aa)) enclose the PE domain.

This sequence belongs to the mycobacterial PE family.

The protein localises to the secreted. The protein resides in the cell envelope. It localises to the cell surface. May play a pivotal role in the evasion of host immune response by M.tuberculosis. Mediates production of IL-10 via activation of the p38 and ERK1/2 mitogen-activated protein kinase (MAPK) signaling pathways. In Mycobacterium tuberculosis (strain CDC 1551 / Oshkosh), this protein is PE family immunomodulator PE15 (PE15).